A 216-amino-acid chain; its full sequence is 3-isopropylmalate dehydratase small subunit (216 aa).

This sequence belongs to the LeuD family. LeuD type 1 subfamily. Heterodimer of LeuC and LeuD.

The enzyme catalyses (2R,3S)-3-isopropylmalate = (2S)-2-isopropylmalate. It functions in the pathway amino-acid biosynthesis; L-leucine biosynthesis; L-leucine from 3-methyl-2-oxobutanoate: step 2/4. In terms of biological role, catalyzes the isomerization between 2-isopropylmalate and 3-isopropylmalate, via the formation of 2-isopropylmaleate. This Cupriavidus pinatubonensis (strain JMP 134 / LMG 1197) (Cupriavidus necator (strain JMP 134)) protein is 3-isopropylmalate dehydratase small subunit.